The primary structure comprises 259 residues: uncharacterized protein (259 aa).

Helical transmembrane passes span 9-31, 84-106, 126-148, 153-175, 196-215, and 230-252; these read ILSV…LESL, LLGG…LQWF, FLIY…FVFG, SIVA…LEYV, HFIL…YIAA, and TFRA…SWLG.

It is found in the cell membrane. This is an uncharacterized protein from Archaeoglobus fulgidus (strain ATCC 49558 / DSM 4304 / JCM 9628 / NBRC 100126 / VC-16).